A 367-amino-acid chain; its full sequence is Glutamate 5-kinase (367 aa).

Position 10 (Lys-10) interacts with ATP. Substrate is bound by residues Ser-50, Asp-137, and Asn-149. Residues 169-170 (TD) and 211-217 (TGGMETK) contribute to the ATP site. One can recognise a PUA domain in the interval 275 to 353 (AGDITVDDGA…QDISDILGYE (79 aa)).

Belongs to the glutamate 5-kinase family.

It is found in the cytoplasm. The enzyme catalyses L-glutamate + ATP = L-glutamyl 5-phosphate + ADP. It functions in the pathway amino-acid biosynthesis; L-proline biosynthesis; L-glutamate 5-semialdehyde from L-glutamate: step 1/2. Its function is as follows. Catalyzes the transfer of a phosphate group to glutamate to form L-glutamate 5-phosphate. This Sodalis glossinidius (strain morsitans) protein is Glutamate 5-kinase.